Reading from the N-terminus, the 363-residue chain is Flagellar P-ring protein (363 aa).

A signal peptide spans 1-20 (MKCKLIFAVFMLAFSMPSQA).

It belongs to the FlgI family. In terms of assembly, the basal body constitutes a major portion of the flagellar organelle and consists of four rings (L,P,S, and M) mounted on a central rod.

The protein localises to the periplasm. The protein resides in the bacterial flagellum basal body. In terms of biological role, assembles around the rod to form the L-ring and probably protects the motor/basal body from shearing forces during rotation. The protein is Flagellar P-ring protein of Shewanella oneidensis (strain ATCC 700550 / JCM 31522 / CIP 106686 / LMG 19005 / NCIMB 14063 / MR-1).